A 342-amino-acid chain; its full sequence is D-erythrose-4-phosphate dehydrogenase (342 aa).

An NAD(+)-binding site is contributed by 12 to 13; sequence RI. Substrate-binding positions include 154 to 156, Arg200, 213 to 214, and Arg236; these read SCT and TK. The active-site Nucleophile is Cys155. Residue Asn318 participates in NAD(+) binding.

The protein belongs to the glyceraldehyde-3-phosphate dehydrogenase family. Epd subfamily. Homotetramer.

The protein localises to the cytoplasm. It carries out the reaction D-erythrose 4-phosphate + NAD(+) + H2O = 4-phospho-D-erythronate + NADH + 2 H(+). Its pathway is cofactor biosynthesis; pyridoxine 5'-phosphate biosynthesis; pyridoxine 5'-phosphate from D-erythrose 4-phosphate: step 1/5. Catalyzes the NAD-dependent conversion of D-erythrose 4-phosphate to 4-phosphoerythronate. The protein is D-erythrose-4-phosphate dehydrogenase of Klebsiella pneumoniae (strain 342).